Consider the following 296-residue polypeptide: Telomere repeat-binding factor 4 (296 aa).

Positions 1-62 (MGNQKLKWTA…WRNLSVAPGI (62 aa)) constitute an HTH myb-type domain. The H-T-H motif DNA-binding region spans 28-58 (WKNILRDPELAEQLSSRSNIDLKDKWRNLSV). Positions 126–200 (NAPRYDGMIF…STQNFYKMND (75 aa)) constitute an H15 domain. Residues 197-232 (KMNDNSLVQRTPHVARPKESNTKSRQQTNSQGPSIS) form a disordered region. The segment covering 219–232 (KSRQQTNSQGPSIS) has biased composition (polar residues). Residues 245-282 (KLVEVENKLDVSKGAAEEIERLMKLAEEADEMLVIARE) adopt a coiled-coil conformation.

Belongs to the histone H1/H5 family. SMH subfamily.

Its subcellular location is the nucleus. The protein resides in the chromosome. In terms of biological role, binds preferentially double-stranded telomeric repeats. This is Telomere repeat-binding factor 4 from Arabidopsis thaliana (Mouse-ear cress).